The primary structure comprises 230 residues: Large ribosomal subunit protein uL1 (230 aa).

This sequence belongs to the universal ribosomal protein uL1 family. As to quaternary structure, part of the 50S ribosomal subunit.

Its function is as follows. Binds directly to 23S rRNA. The L1 stalk is quite mobile in the ribosome, and is involved in E site tRNA release. Functionally, protein L1 is also a translational repressor protein, it controls the translation of the L11 operon by binding to its mRNA. The chain is Large ribosomal subunit protein uL1 from Caldicellulosiruptor bescii (strain ATCC BAA-1888 / DSM 6725 / KCTC 15123 / Z-1320) (Anaerocellum thermophilum).